The primary structure comprises 233 residues: Ribosome-recycling factor, mitochondrial (233 aa).

It belongs to the RRF family.

Its subcellular location is the mitochondrion. In terms of biological role, necessary for protein synthesis in mitochondria. Functions as a ribosome recycling factor in mitochondria. In Candida glabrata (strain ATCC 2001 / BCRC 20586 / JCM 3761 / NBRC 0622 / NRRL Y-65 / CBS 138) (Yeast), this protein is Ribosome-recycling factor, mitochondrial (RRF1).